The following is a 91-amino-acid chain: Small ribosomal subunit protein uS19 (91 aa).

It belongs to the universal ribosomal protein uS19 family.

Protein S19 forms a complex with S13 that binds strongly to the 16S ribosomal RNA. This chain is Small ribosomal subunit protein uS19, found in Shouchella clausii (strain KSM-K16) (Alkalihalobacillus clausii).